A 453-amino-acid polypeptide reads, in one-letter code: Glucose N-acetyltransferase 1-B (453 aa).

Residues 1 to 8 are Cytoplasmic-facing; that stretch reads MLKRKVRY. Residues 9–29 form a helical; Signal-anchor for type II membrane protein membrane-spanning segment; the sequence is LLLIVVVFTGIILSVEAIMRF. At 30 to 453 the chain is on the lumenal side; that stretch reads QLNKNVDYYL…LESRAICQVN (424 aa). Residues Asn-108, Asn-126, and Asn-176 are each glycosylated (N-linked (GlcNAc...) asparagine). A DXD motif is present at residues 187–189; it reads DND.

This sequence belongs to the GNT1 family.

It is found in the golgi apparatus membrane. The protein resides in the vacuole membrane. Functionally, N-acetylglucosaminyltransferase involved in the Golgi-specific modification of N-linked glycans. This chain is Glucose N-acetyltransferase 1-B (GNT1-B), found in Kluyveromyces lactis (strain ATCC 8585 / CBS 2359 / DSM 70799 / NBRC 1267 / NRRL Y-1140 / WM37) (Yeast).